The primary structure comprises 486 residues: Probable cytosol aminopeptidase (486 aa).

Lysine 256 and aspartate 261 together coordinate Mn(2+). Lysine 268 is an active-site residue. Mn(2+)-binding residues include aspartate 280, aspartate 339, and glutamate 341. Residue arginine 343 is part of the active site.

It belongs to the peptidase M17 family. Mn(2+) serves as cofactor.

The protein resides in the cytoplasm. It catalyses the reaction Release of an N-terminal amino acid, Xaa-|-Yaa-, in which Xaa is preferably Leu, but may be other amino acids including Pro although not Arg or Lys, and Yaa may be Pro. Amino acid amides and methyl esters are also readily hydrolyzed, but rates on arylamides are exceedingly low.. It carries out the reaction Release of an N-terminal amino acid, preferentially leucine, but not glutamic or aspartic acids.. Presumably involved in the processing and regular turnover of intracellular proteins. Catalyzes the removal of unsubstituted N-terminal amino acids from various peptides. This Synechococcus sp. (strain ATCC 27144 / PCC 6301 / SAUG 1402/1) (Anacystis nidulans) protein is Probable cytosol aminopeptidase.